The sequence spans 575 residues: uncharacterized protein (575 aa).

The first 28 residues, 1 to 28 (MSNLLWKSLVVSPAVLGATLLVSSAAIA), serve as a signal peptide directing secretion. Residues 87–151 (SVSQFSDVQP…DRVNELIATA (65 aa)) enclose the SLH domain. A coiled-coil region spans residues 158–196 (KQDLATLQRLQEEFSAELATLRGRVDALEARTAELEANQ).

Belongs to the OprB family.

This is an uncharacterized protein from Nostoc sp. (strain PCC 7120 / SAG 25.82 / UTEX 2576).